The sequence spans 524 residues: Light-independent protochlorophyllide reductase subunit B (524 aa).

Asp36 lines the [4Fe-4S] cluster pocket. Asp290 functions as the Proton donor in the catalytic mechanism. Position 425 to 426 (425 to 426 (GL)) interacts with substrate.

Belongs to the ChlB/BchB/BchZ family. In terms of assembly, protochlorophyllide reductase is composed of three subunits; ChlL, ChlN and ChlB. Forms a heterotetramer of two ChlB and two ChlN subunits. [4Fe-4S] cluster is required as a cofactor.

It carries out the reaction chlorophyllide a + oxidized 2[4Fe-4S]-[ferredoxin] + 2 ADP + 2 phosphate = protochlorophyllide a + reduced 2[4Fe-4S]-[ferredoxin] + 2 ATP + 2 H2O. The protein operates within porphyrin-containing compound metabolism; chlorophyll biosynthesis (light-independent). In terms of biological role, component of the dark-operative protochlorophyllide reductase (DPOR) that uses Mg-ATP and reduced ferredoxin to reduce ring D of protochlorophyllide (Pchlide) to form chlorophyllide a (Chlide). This reaction is light-independent. The NB-protein (ChlN-ChlB) is the catalytic component of the complex. The chain is Light-independent protochlorophyllide reductase subunit B from Parasynechococcus marenigrum (strain WH8102).